Here is a 72-residue protein sequence, read N- to C-terminus: Cell division protein ZapB (72 aa).

A coiled-coil region spans residues 1–72; it reads MSSEILDQLE…RSLLGQIDNV (72 aa).

The protein belongs to the ZapB family. Homodimer. The ends of the coiled-coil dimer bind to each other, forming polymers. Interacts with FtsZ.

The protein resides in the cytoplasm. Its function is as follows. Non-essential, abundant cell division factor that is required for proper Z-ring formation. It is recruited early to the divisome by direct interaction with FtsZ, stimulating Z-ring assembly and thereby promoting cell division earlier in the cell cycle. Its recruitment to the Z-ring requires functional FtsA or ZipA. This is Cell division protein ZapB from Actinobacillus succinogenes (strain ATCC 55618 / DSM 22257 / CCUG 43843 / 130Z).